A 493-amino-acid chain; its full sequence is Protein LTV1 homolog (493 aa).

Disordered stretches follow at residues 42–63 (AAAR…QRQE), 97–119 (PNQA…KLML), and 170–207 (IQAM…DENE). Acidic residues predominate over residues 176 to 207 (GDSDDEEWDDEDGEEQSDMDFDSDDLNEDENE). 5 positions are modified to phosphoserine: S345, S369, S370, S424, and S427. Residues 359 to 387 (VIDEPRRSRRSSASTNPAPIQIDPKTGLP) are disordered. A coiled-coil region spans residues 437–468 (KDETHEEKKERKRLLKDYRNERRIEKKANTEA). Residues 465-474 (NTEAFKEEKK) show a composition bias toward basic and acidic residues. Residues 465–493 (NTEAFKEEKKRQTHVKINQRTNQQGASIV) form a disordered region. Polar residues predominate over residues 479–493 (VKINQRTNQQGASIV).

The protein belongs to the LTV1 family. Interacts with RpS3; the interaction is RNA-independent. Associates with free 40S ribosome subunits.

The protein localises to the cytoplasm. Functionally, necessary for the biogenesis of 40S ribosome subunits by regulating pre-rRNA processing. Non-ribosomal factor required for efficient nuclear export of the ribosomal 40S subunit. Necessary for endoreplication driven by Myc. This chain is Protein LTV1 homolog, found in Drosophila melanogaster (Fruit fly).